We begin with the raw amino-acid sequence, 64 residues long: Large ribosomal subunit protein bL35 (64 aa).

The protein belongs to the bacterial ribosomal protein bL35 family.

This Vibrio campbellii (strain ATCC BAA-1116) protein is Large ribosomal subunit protein bL35.